Here is a 536-residue protein sequence, read N- to C-terminus: Phosphoenolpyruvate carboxykinase (ATP) (536 aa).

Substrate is bound by residues Arg63, Tyr203, and Lys209. ATP contacts are provided by residues Lys209, His228, and 244-252 (GLSGTGKTT). Lys209 and His228 together coordinate Mn(2+). Mn(2+) is bound at residue Asp265. Residues Glu293, Arg329, 445 to 446 (RI), and Thr451 contribute to the ATP site. Arg329 serves as a coordination point for substrate.

This sequence belongs to the phosphoenolpyruvate carboxykinase (ATP) family. In terms of assembly, monomer. The cofactor is Mn(2+).

Its subcellular location is the cytoplasm. The enzyme catalyses oxaloacetate + ATP = phosphoenolpyruvate + ADP + CO2. It participates in carbohydrate biosynthesis; gluconeogenesis. Functionally, involved in the gluconeogenesis. Catalyzes the conversion of oxaloacetate (OAA) to phosphoenolpyruvate (PEP) through direct phosphoryl transfer between the nucleoside triphosphate and OAA. This is Phosphoenolpyruvate carboxykinase (ATP) from Colwellia psychrerythraea (strain 34H / ATCC BAA-681) (Vibrio psychroerythus).